The following is a 412-amino-acid chain: MYNIDTIKKIDSQLAEAIELEVNRQRNKIELIASENFVSDAVIEALGTPLTNKYAEGYPGKRYYGGCEYVDIVEQLAIDRAKQIFGAEHANVQPHSGAQANTAVYFAFLNPGDTILGMNLAHGGHLSHGSPVNISGKYYKVVPYGVREDNCYIDYDELRKTAKENSPKIIVAGASAYPRILDFKAFREIADEVGAILMVDMAHIAGLVAAGVHPSPVPYADVVTTTTHKTLRGPRGGMILCKQEYAKKIDSAVFPGNQGGPLMHVIAAKAVSFKEALTDDFKIYQQNIVKNAKALASALMEKGFKLVSDGTDNHLMLINLTNMNITGKEAQHKLDEVCITCNKNGIPFDTQSPFITSGIRLGTPAVTSRGMNEEDMKEIADLIHLTISDFENSRTNIIRRVEALCNKYPLYE.

Residues L120 and 124 to 126 each bind (6S)-5,6,7,8-tetrahydrofolate; that span reads GHL. Residue K229 is modified to N6-(pyridoxal phosphate)lysine. 352 to 354 serves as a coordination point for (6S)-5,6,7,8-tetrahydrofolate; it reads SPF.

This sequence belongs to the SHMT family. Homodimer. The cofactor is pyridoxal 5'-phosphate.

It is found in the cytoplasm. The enzyme catalyses (6R)-5,10-methylene-5,6,7,8-tetrahydrofolate + glycine + H2O = (6S)-5,6,7,8-tetrahydrofolate + L-serine. The protein operates within one-carbon metabolism; tetrahydrofolate interconversion. It functions in the pathway amino-acid biosynthesis; glycine biosynthesis; glycine from L-serine: step 1/1. In terms of biological role, catalyzes the reversible interconversion of serine and glycine with tetrahydrofolate (THF) serving as the one-carbon carrier. This reaction serves as the major source of one-carbon groups required for the biosynthesis of purines, thymidylate, methionine, and other important biomolecules. Also exhibits THF-independent aldolase activity toward beta-hydroxyamino acids, producing glycine and aldehydes, via a retro-aldol mechanism. This chain is Serine hydroxymethyltransferase, found in Ruminiclostridium cellulolyticum (strain ATCC 35319 / DSM 5812 / JCM 6584 / H10) (Clostridium cellulolyticum).